The chain runs to 428 residues: C4-dicarboxylate transport protein (428 aa).

The next 9 helical transmembrane spans lie at 8 to 28, 44 to 64, 76 to 96, 142 to 162, 184 to 204, 222 to 242, 289 to 309, 326 to 346, and 352 to 372; these read SLYV…HFYP, LIKM…IAGM, VALL…LIIV, IGAF…LFGF, VIFG…FGAM, LIIC…GSIA, VVGL…SIYL, IFHQ…AAGV, and IVLA…LALI.

The protein belongs to the dicarboxylate/amino acid:cation symporter (DAACS) (TC 2.A.23) family.

It localises to the cell inner membrane. In terms of biological role, responsible for the transport of dicarboxylates such as succinate, fumarate, and malate from the periplasm across the membrane. The protein is C4-dicarboxylate transport protein of Klebsiella pneumoniae (strain 342).